Here is a 323-residue protein sequence, read N- to C-terminus: NADH-cytochrome b5 reductase 2 (323 aa).

Residues 32–48 form a helical membrane-spanning segment; sequence LAPIYVAVGLTGLGVGL. The FAD-binding FR-type domain maps to 72 to 177; the sequence is QGWVDLKLAQ…KGPIPKYPWE (106 aa). FAD is bound at residue 180 to 215; the sequence is KHKHICLIAGGTGITPMYQLARKIFKDPEDQTKVTL.

The protein belongs to the flavoprotein pyridine nucleotide cytochrome reductase family. FAD serves as cofactor.

Its subcellular location is the mitochondrion outer membrane. The catalysed reaction is 2 Fe(III)-[cytochrome b5] + NADH = 2 Fe(II)-[cytochrome b5] + NAD(+) + H(+). In terms of biological role, may mediate the reduction of outer membrane cytochrome b5. This Neosartorya fischeri (strain ATCC 1020 / DSM 3700 / CBS 544.65 / FGSC A1164 / JCM 1740 / NRRL 181 / WB 181) (Aspergillus fischerianus) protein is NADH-cytochrome b5 reductase 2 (mcr1).